Here is a 517-residue protein sequence, read N- to C-terminus: ATP synthase subunit beta (517 aa).

Position 167–174 (167–174) interacts with ATP; that stretch reads GGAGVGKT. 2 stretches are compositionally biased toward basic and acidic residues: residues 475–484 and 495–508; these read AESMGAKMDD and DSKD…KADD. The interval 475 to 517 is disordered; sequence AESMGAKMDDGGSDGAPPPSDSKDKGKGDSKADDKGDDADKDA.

Belongs to the ATPase alpha/beta chains family. F-type ATPases have 2 components, CF(1) - the catalytic core - and CF(0) - the membrane proton channel. CF(1) has five subunits: alpha(3), beta(3), gamma(1), delta(1), epsilon(1). CF(0) has three main subunits: a(1), b(2) and c(9-12). The alpha and beta chains form an alternating ring which encloses part of the gamma chain. CF(1) is attached to CF(0) by a central stalk formed by the gamma and epsilon chains, while a peripheral stalk is formed by the delta and b chains.

It is found in the cell membrane. It carries out the reaction ATP + H2O + 4 H(+)(in) = ADP + phosphate + 5 H(+)(out). In terms of biological role, produces ATP from ADP in the presence of a proton gradient across the membrane. The catalytic sites are hosted primarily by the beta subunits. The protein is ATP synthase subunit beta of Mycobacterium sp. (strain JLS).